Here is a 612-residue protein sequence, read N- to C-terminus: MIVDNSKDFDLKSFLANLTTHSGVYRMLDKHGEIIYVGKAKNLKNRINSYFSKGAKDSKTLMMVEQIARIEITITPSDYEAYLLENNLIKQHRPKYNILFKDDKSYPYLVISRDKFPRVSFYRGKSAYKKGQCFGPYVSISSVKNTLNTIQKIFPIRQCENSYYKSRVRPCLQYQIKRCLAPCVGLVSQQQYDEQLAILKKFLAGKFSSVLEEISAKMYQASEDMEYEKAQVYRDQLVVLRKLQQQQIVDIQEDKTFDVIGIYMQDSYASIALLQIQNGDVVADRHWSIDAKGQDKTSIMHAFLSHFYLGDEIRNIWPKNIILSKVEFADITDLMNSISQKIGQAINWIIAPAADNLKWLKLAEVNARQKLNIYTSSKSQYQKRLESLKEFLESEKDIKRIECFDISHFQGEATIASCVVYTDDGEDRKSHRRYNIKDIKSGDDYAAIHQAVSRRVSSGLEADNLPDVMIIDGGKGQIHQAEAVFREYGIQDKVQLVSLGKGVERISGKEKIYKGFDDTEYTLDEHNPGFLLLRQVRDSAHDHAIKGQRKKVSANRQSSIIEEIEGVGPKRRKALMMYFGGWQELSRASVDEIAKVKGISKKLAQEIWECFH.

The GIY-YIG domain maps to 20 to 98 (THSGVYRMLD…IKQHRPKYNI (79 aa)). In terms of domain architecture, UVR spans 208–243 (SSVLEEISAKMYQASEDMEYEKAQVYRDQLVVLRKL).

It belongs to the UvrC family. In terms of assembly, interacts with UvrB in an incision complex.

It localises to the cytoplasm. The UvrABC repair system catalyzes the recognition and processing of DNA lesions. UvrC both incises the 5' and 3' sides of the lesion. The N-terminal half is responsible for the 3' incision and the C-terminal half is responsible for the 5' incision. The protein is UvrABC system protein C of Francisella tularensis subsp. holarctica (strain FTNF002-00 / FTA).